The primary structure comprises 537 residues: Cytochrome c oxidase subunit 1 (537 aa).

A helical transmembrane segment spans residues 22–42; it reads ILYLLFGLVSGIIGSVFSFII. The Ca(2+) site is built by E45, A48, and G50. Residue H68 participates in Fe(II)-heme a binding. Transmembrane regions (helical) follow at residues 70–90, 104–124, 152–172, 190–210, 241–261, 279–299, 318–338, and 345–365; these read ILMI…NYLV, VNNF…ISAL, LAIL…VNLI, LFAW…PVLA, LFWF…FGVV, MLWA…HHLF, IAIP…GGAI, and MLYA…GVIL. Residue H247 coordinates Cu cation. Residues 247-251 constitute a cross-link (1'-histidyl-3'-tyrosine (His-Tyr)); the sequence is HPEVY. Y251 contacts O2. Cu cation-binding residues include H296 and H297. Mg(2+) contacts are provided by H375 and D376. The next 2 helical transmembrane spans lie at 379–399 and 418–438; these read FVVA…LCGA and IQFW…HFLG. H383 lines the heme a3 pocket. H385 is a Fe(II)-heme a binding site. Ca(2+) is bound at residue P447. The helical transmembrane segment at 458–478 threads the bilayer; the sequence is FVSSIGSVISILSLFLFMYVM.

This sequence belongs to the heme-copper respiratory oxidase family. As to quaternary structure, component of the cytochrome c oxidase (complex IV, CIV), a multisubunit enzyme composed of a catalytic core of 3 subunits and several supernumerary subunits. The complex exists as a monomer or a dimer and forms supercomplexes (SCs) in the inner mitochondrial membrane with ubiquinol-cytochrome c oxidoreductase (cytochrome b-c1 complex, complex III, CIII). Requires heme as cofactor. Cu cation serves as cofactor.

It localises to the mitochondrion inner membrane. The enzyme catalyses 4 Fe(II)-[cytochrome c] + O2 + 8 H(+)(in) = 4 Fe(III)-[cytochrome c] + 2 H2O + 4 H(+)(out). The protein operates within energy metabolism; oxidative phosphorylation. Component of the cytochrome c oxidase, the last enzyme in the mitochondrial electron transport chain which drives oxidative phosphorylation. The respiratory chain contains 3 multisubunit complexes succinate dehydrogenase (complex II, CII), ubiquinol-cytochrome c oxidoreductase (cytochrome b-c1 complex, complex III, CIII) and cytochrome c oxidase (complex IV, CIV), that cooperate to transfer electrons derived from NADH and succinate to molecular oxygen, creating an electrochemical gradient over the inner membrane that drives transmembrane transport and the ATP synthase. Cytochrome c oxidase is the component of the respiratory chain that catalyzes the reduction of oxygen to water. Electrons originating from reduced cytochrome c in the intermembrane space (IMS) are transferred via the dinuclear copper A center (CU(A)) of subunit 2 and heme A of subunit 1 to the active site in subunit 1, a binuclear center (BNC) formed by heme A3 and copper B (CU(B)). The BNC reduces molecular oxygen to 2 water molecules using 4 electrons from cytochrome c in the IMS and 4 protons from the mitochondrial matrix. The sequence is that of Cytochrome c oxidase subunit 1 (cox1) from Schizosaccharomyces pombe (strain 972 / ATCC 24843) (Fission yeast).